The sequence spans 332 residues: Adenosine receptor A2b (332 aa).

The Extracellular segment spans residues 1 to 8 (MQLETQDA). The chain crosses the membrane as a helical span at residues 9 to 33 (LYVALELAIAALSVAGNVLVCAAVG). Topologically, residues 34-43 (TSSALQTPTN) are cytoplasmic. Residues 44 to 67 (YFLVSLAAADVAVGLFAIPFAITI) traverse the membrane as a helical segment. At 68–78 (SLGFCTDFHSC) the chain is on the extracellular side. The cysteines at positions 78 and 170 are disulfide-linked. Residues 79–101 (LFLACFVLVLTQSSIFSLLAVAV) traverse the membrane as a helical segment. At 102-121 (DRYLAIRVPLRYKSLVTGTR) the chain is on the cytoplasmic side. A helical transmembrane segment spans residues 122-144 (ARGVIAVLWVLAFGIGLTPFLGW). At 145 to 177 (NSKDSATNCTEPWDGTTNESCCLVKCLFENVVP) the chain is on the extracellular side. 2 N-linked (GlcNAc...) asparagine glycosylation sites follow: asparagine 152 and asparagine 162. Glutamate 173 lines the adenosine pocket. Residues 178–202 (MSYMVYFNFFGCVLPPLLIMLVIYI) form a helical membrane-spanning segment. Topologically, residues 203-234 (KIFMVACKQLQRTELVDHSRTVIQREIHAAKS) are cytoplasmic. The helical transmembrane segment at 235 to 258 (LAMIVGIFALCWLPVHAINCVTLF) threads the bilayer. Position 253 (asparagine 253) interacts with adenosine. Over 259 to 266 (QPARAKDK) the chain is Extracellular. The chain crosses the membrane as a helical span at residues 267-290 (PKWAMNMAILLSHASSVVNPIVYA). 2 residues coordinate adenosine: serine 278 and histidine 279. The Cytoplasmic segment spans residues 291 to 332 (YRNRDFRYTFHKIISRYVLCQTDVLKSGNGQAGTQSALDVGL). The S-palmitoyl cysteine moiety is linked to residue cysteine 310.

Belongs to the G-protein coupled receptor 1 family.

It localises to the cell membrane. Receptor for adenosine. The activity of this receptor is mediated by G proteins which activate adenylyl cyclase. The chain is Adenosine receptor A2b (ADORA2B) from Canis lupus familiaris (Dog).